The primary structure comprises 349 residues: DNA fragmentation factor subunit beta (349 aa).

Positions 7 to 83 constitute a CIDE-N domain; sequence QPKCVKLRAL…LLTAGETWHG (77 aa). Residues 319–349 are disordered; sequence RSRIYRPQTGSRRKQPPRKQPPRKRPPRKRQ. The span at 329 to 349 shows a compositional bias: basic residues; the sequence is SRRKQPPRKQPPRKRPPRKRQ.

Heterodimer of DFFA and DFFB. Interacts with H1-1.

It is found in the cytoplasm. The protein localises to the nucleus. Its activity is regulated as follows. Inhibited by DFFA (DFF45). Functionally, nuclease that induces DNA fragmentation and chromatin condensation during apoptosis. Degrades naked DNA and induces apoptotic morphology. In Rattus norvegicus (Rat), this protein is DNA fragmentation factor subunit beta (Dffb).